Consider the following 102-residue polypeptide: uncharacterized protein (102 aa).

The helical transmembrane segment at 7–23 (IVFVSCVILGLAACSSQ) threads the bilayer.

It localises to the membrane. This is an uncharacterized protein from Haemophilus influenzae (strain ATCC 51907 / DSM 11121 / KW20 / Rd).